Consider the following 454-residue polypeptide: tRNA modification GTPase MnmE (454 aa).

(6S)-5-formyl-5,6,7,8-tetrahydrofolate-binding residues include Arg-23, Glu-80, and Lys-120. A TrmE-type G domain is found at 216 to 377; sequence GMKVVIAGRP…LRNHLKQSMG (162 aa). K(+) is bound at residue Asn-226. Residues 226 to 231, 245 to 251, 270 to 273, 335 to 338, and 358 to 360 each bind GTP; these read NAGKSS, TDIAGTT, DTAG, NKAD, and SAR. Position 230 (Ser-230) interacts with Mg(2+). K(+)-binding residues include Thr-245, Ile-247, and Thr-250. Residue Thr-251 coordinates Mg(2+). Lys-454 contacts (6S)-5-formyl-5,6,7,8-tetrahydrofolate.

The protein belongs to the TRAFAC class TrmE-Era-EngA-EngB-Septin-like GTPase superfamily. TrmE GTPase family. As to quaternary structure, homodimer. Heterotetramer of two MnmE and two MnmG subunits. Requires K(+) as cofactor.

The protein resides in the cytoplasm. Its function is as follows. Exhibits a very high intrinsic GTPase hydrolysis rate. Involved in the addition of a carboxymethylaminomethyl (cmnm) group at the wobble position (U34) of certain tRNAs, forming tRNA-cmnm(5)s(2)U34. This chain is tRNA modification GTPase MnmE, found in Salmonella arizonae (strain ATCC BAA-731 / CDC346-86 / RSK2980).